The chain runs to 455 residues: Ribulose bisphosphate carboxylase large chain (455 aa).

K5 is modified (N6,N6,N6-trimethyllysine). Substrate contacts are provided by N114 and T164. K166 serves as the catalytic Proton acceptor. K168 lines the substrate pocket. Residues K192, D194, and E195 each coordinate Mg(2+). K192 carries the post-translational modification N6-carboxylysine. Residue H285 is the Proton acceptor of the active site. The substrate site is built by R286, H318, and S370.

This sequence belongs to the RuBisCO large chain family. Type I subfamily. As to quaternary structure, heterohexadecamer of 8 large chains and 8 small chains; disulfide-linked. The disulfide link is formed within the large subunit homodimers. The cofactor is Mg(2+). The disulfide bond which can form in the large chain dimeric partners within the hexadecamer appears to be associated with oxidative stress and protein turnover.

Its subcellular location is the plastid. It localises to the chloroplast. It catalyses the reaction 2 (2R)-3-phosphoglycerate + 2 H(+) = D-ribulose 1,5-bisphosphate + CO2 + H2O. The catalysed reaction is D-ribulose 1,5-bisphosphate + O2 = 2-phosphoglycolate + (2R)-3-phosphoglycerate + 2 H(+). RuBisCO catalyzes two reactions: the carboxylation of D-ribulose 1,5-bisphosphate, the primary event in carbon dioxide fixation, as well as the oxidative fragmentation of the pentose substrate in the photorespiration process. Both reactions occur simultaneously and in competition at the same active site. This is Ribulose bisphosphate carboxylase large chain from Lupinus paraguariensis (Lupine).